The following is a 213-amino-acid chain: Outer-membrane lipoprotein LolB (213 aa).

An N-terminal signal peptide occupies residues 1–24 (MNNLSYFTKTKLVWVILSLSLLSA). A lipid anchor (N-palmitoyl cysteine) is attached at Cys-25. Cys-25 carries the S-diacylglycerol cysteine lipid modification.

Belongs to the LolB family. As to quaternary structure, monomer.

It is found in the cell outer membrane. Functionally, plays a critical role in the incorporation of lipoproteins in the outer membrane after they are released by the LolA protein. The sequence is that of Outer-membrane lipoprotein LolB from Shewanella woodyi (strain ATCC 51908 / MS32).